The sequence spans 64 residues: Putative antitoxin MJ0975 (64 aa).

It belongs to the UPF0165 family.

In terms of biological role, possibly the antitoxin component of a type II toxin-antitoxin (TA) system. Its cognate toxin is VapC2 (Potential). This is Putative antitoxin MJ0975 (vapB2) from Methanocaldococcus jannaschii (strain ATCC 43067 / DSM 2661 / JAL-1 / JCM 10045 / NBRC 100440) (Methanococcus jannaschii).